The following is a 113-amino-acid chain: CRISPR-associated endoribonuclease Cas2 (113 aa).

Aspartate 33 contacts Mg(2+).

It belongs to the CRISPR-associated endoribonuclease Cas2 protein family. In terms of assembly, homodimer, forms a heterotetramer with a Cas1 homodimer. Mg(2+) is required as a cofactor.

CRISPR (clustered regularly interspaced short palindromic repeat), is an adaptive immune system that provides protection against mobile genetic elements (viruses, transposable elements and conjugative plasmids). CRISPR clusters contain sequences complementary to antecedent mobile elements and target invading nucleic acids. CRISPR clusters are transcribed and processed into CRISPR RNA (crRNA). Functions as a ssRNA-specific endoribonuclease. Involved in the integration of spacer DNA into the CRISPR cassette. The type III-A Csm effector complex binds crRNA and acts as a crRNA-guided RNase, DNase and cyclic oligoadenylate synthase; binding of target RNA cognate to the crRNA is required for all activities. This is CRISPR-associated endoribonuclease Cas2 from Mycobacterium tuberculosis (strain CDC 1551 / Oshkosh).